The chain runs to 469 residues: tRNA(Ile)-lysidine synthase (469 aa).

Ser-26 to Ser-31 provides a ligand contact to ATP.

The protein belongs to the tRNA(Ile)-lysidine synthase family.

The protein localises to the cytoplasm. It catalyses the reaction cytidine(34) in tRNA(Ile2) + L-lysine + ATP = lysidine(34) in tRNA(Ile2) + AMP + diphosphate + H(+). In terms of biological role, ligates lysine onto the cytidine present at position 34 of the AUA codon-specific tRNA(Ile) that contains the anticodon CAU, in an ATP-dependent manner. Cytidine is converted to lysidine, thus changing the amino acid specificity of the tRNA from methionine to isoleucine. The protein is tRNA(Ile)-lysidine synthase of Clostridium perfringens (strain 13 / Type A).